The primary structure comprises 115 residues: MRIYINEIKLKDDGVYCFSEESTEGLEEVGQMLVDSDNYGFAYLLDDGQSYSYLIFVQETWSMLHENRDKKIIINNHLELKHFQEELDYVLNNIEGNNNYGKEFVSAVEKTFELE.

This sequence belongs to the UPF0738 family.

The sequence is that of UPF0738 protein SERP0585 from Staphylococcus epidermidis (strain ATCC 35984 / DSM 28319 / BCRC 17069 / CCUG 31568 / BM 3577 / RP62A).